The primary structure comprises 273 residues: 4-hydroxy-tetrahydrodipicolinate reductase (273 aa).

Residues 12-17 (GAGGRM) and E38 contribute to the NAD(+) site. R39 is a binding site for NADP(+). NAD(+) contacts are provided by residues 102-104 (GTT) and 126-129 (AANF). Residue H159 is the Proton donor/acceptor of the active site. (S)-2,3,4,5-tetrahydrodipicolinate is bound at residue H160. Catalysis depends on K163, which acts as the Proton donor. Residue 169-170 (GT) coordinates (S)-2,3,4,5-tetrahydrodipicolinate.

The protein belongs to the DapB family. Homotetramer.

Its subcellular location is the cytoplasm. It carries out the reaction (S)-2,3,4,5-tetrahydrodipicolinate + NAD(+) + H2O = (2S,4S)-4-hydroxy-2,3,4,5-tetrahydrodipicolinate + NADH + H(+). The catalysed reaction is (S)-2,3,4,5-tetrahydrodipicolinate + NADP(+) + H2O = (2S,4S)-4-hydroxy-2,3,4,5-tetrahydrodipicolinate + NADPH + H(+). It participates in amino-acid biosynthesis; L-lysine biosynthesis via DAP pathway; (S)-tetrahydrodipicolinate from L-aspartate: step 4/4. In terms of biological role, catalyzes the conversion of 4-hydroxy-tetrahydrodipicolinate (HTPA) to tetrahydrodipicolinate. This Salmonella schwarzengrund (strain CVM19633) protein is 4-hydroxy-tetrahydrodipicolinate reductase.